Here is a 500-residue protein sequence, read N- to C-terminus: Proline--tRNA ligase (500 aa).

The protein belongs to the class-II aminoacyl-tRNA synthetase family. ProS type 3 subfamily. As to quaternary structure, homodimer.

It localises to the cytoplasm. The enzyme catalyses tRNA(Pro) + L-proline + ATP = L-prolyl-tRNA(Pro) + AMP + diphosphate. Its function is as follows. Catalyzes the attachment of proline to tRNA(Pro) in a two-step reaction: proline is first activated by ATP to form Pro-AMP and then transferred to the acceptor end of tRNA(Pro). The polypeptide is Proline--tRNA ligase (Paramagnetospirillum magneticum (strain ATCC 700264 / AMB-1) (Magnetospirillum magneticum)).